Consider the following 318-residue polypeptide: uncharacterized protein (318 aa).

This sequence belongs to the glycosyltransferase 2 family.

This is an uncharacterized protein from Rickettsia typhi (strain ATCC VR-144 / Wilmington).